A 671-amino-acid polypeptide reads, in one-letter code: MIKLNVDGSEIEVSEGSTVYQACTQAGKEIPHFCYHQRLKIAGNCRMCLVEMEKSPKPIASCAMPVSNGMVIHTDTPMVKKAREGVMEFLLINHPLDCPICDQGGECNLQDQAFRYGKGTNRFHENKRSIKDKYMGPLIKTAMTRCIQCTRCIRFASDIAGIEEIGAIHRGEHIEVTSYLEQTLDSEISGNMIDICPVGALNSKPYAFKARKWELKHTASIGVHDAEGSNIRIDSRGDEVMRILPRVNEEINEEWLSDKNRFSYDGLKYQRLDRPYIRKNGKLVEASWSEALKTVADKIKSVKPEKIVAIAGSLSSVEAMFMLKTLLQKLGSNNYSVNQFDYKLDTMQRGNYLFNTTIAGIEKADLCLLIGANPRQIAPVLNSRIGMRVRADSLKVARIGGGHNQTYKIQDLGSDIKIIEELAIGTHEFTKALKAAKYLMIIVGDGVYARDDGYAILSLIHKIVTEYNIMRDDWKGFNILHNHASIVGGLDIGFNTPIKLEELELAYLLGTDAIPFDKLKSTFIIYQGHHGDAGASSADVILPAAAYTEQSGIYVNLEGRPQIAEKAVSPVGVAKEDIEIIKELAGYLKIDIGMDNLQEVRVRLAKEYKVFASIDRIIENKFSKFSSKDKLSKEPITAEPINYYMTDVISKNSVTMAKCVEAKEARDEEVA.

A 2Fe-2S ferredoxin-type domain is found at 1-78 (MIKLNVDGSE…GMVIHTDTPM (78 aa)). The [2Fe-2S] cluster site is built by C34, C45, C48, and C62. A 4Fe-4S His(Cys)3-ligated-type domain is found at 78-117 (MVKKAREGVMEFLLINHPLDCPICDQGGECNLQDQAFRYG). 8 residues coordinate [4Fe-4S] cluster: H94, C98, C101, C107, C146, C149, C152, and C196. The 4Fe-4S Mo/W bis-MGD-type domain maps to 215–271 (LKHTASIGVHDAEGSNIRIDSRGDEVMRILPRVNEEINEEWLSDKNRFSYDGLKYQR).

Belongs to the complex I 75 kDa subunit family. The cofactor is [2Fe-2S] cluster. Requires [4Fe-4S] cluster as cofactor.

The enzyme catalyses a quinone + NADH + 5 H(+)(in) = a quinol + NAD(+) + 4 H(+)(out). Functionally, NDH-1 shuttles electrons from NADH, via FMN and iron-sulfur (Fe-S) centers, to quinones in the respiratory chain. Couples the redox reaction to proton translocation (for every two electrons transferred, four hydrogen ions are translocated across the cytoplasmic membrane), and thus conserves the redox energy in a proton gradient. This Rickettsia conorii (strain ATCC VR-613 / Malish 7) protein is NADH-quinone oxidoreductase subunit G (nuoG).